The chain runs to 255 residues: tRNA (guanine-N(1)-)-methyltransferase (255 aa).

S-adenosyl-L-methionine contacts are provided by residues Gly-113 and 133-138 (IGDYVL).

This sequence belongs to the RNA methyltransferase TrmD family. In terms of assembly, homodimer.

The protein resides in the cytoplasm. It carries out the reaction guanosine(37) in tRNA + S-adenosyl-L-methionine = N(1)-methylguanosine(37) in tRNA + S-adenosyl-L-homocysteine + H(+). In terms of biological role, specifically methylates guanosine-37 in various tRNAs. This chain is tRNA (guanine-N(1)-)-methyltransferase, found in Salmonella paratyphi A (strain ATCC 9150 / SARB42).